The sequence spans 419 residues: Probable 3-isopropylmalate dehydratase large subunit (419 aa).

The [4Fe-4S] cluster site is built by cysteine 299, cysteine 359, and cysteine 362.

The protein belongs to the aconitase/IPM isomerase family. LeuC type 2 subfamily. Heterodimer of LeuC and LeuD. [4Fe-4S] cluster serves as cofactor.

The enzyme catalyses (2R,3S)-3-isopropylmalate = (2S)-2-isopropylmalate. Its pathway is amino-acid biosynthesis; L-leucine biosynthesis; L-leucine from 3-methyl-2-oxobutanoate: step 2/4. Its function is as follows. Catalyzes the isomerization between 2-isopropylmalate and 3-isopropylmalate, via the formation of 2-isopropylmaleate. This Methanothermobacter thermautotrophicus (strain ATCC 29096 / DSM 1053 / JCM 10044 / NBRC 100330 / Delta H) (Methanobacterium thermoautotrophicum) protein is Probable 3-isopropylmalate dehydratase large subunit.